We begin with the raw amino-acid sequence, 388 residues long: Pepsin A-4 (388 aa).

An N-terminal signal peptide occupies residues M1–C15. The propeptide at I16–L62 is activation peptide. In terms of domain architecture, Peptidase A1 spans Y76 to A385. Residue D94 is part of the active site. C107 and C112 are joined by a disulfide. Phosphoserine is present on S130. Cysteines 268 and 272 form a disulfide. Residue D277 is part of the active site. Cysteines 311 and 344 form a disulfide.

It belongs to the peptidase A1 family.

It localises to the secreted. The enzyme catalyses Preferential cleavage: hydrophobic, preferably aromatic, residues in P1 and P1' positions. Cleaves 1-Phe-|-Val-2, 4-Gln-|-His-5, 13-Glu-|-Ala-14, 14-Ala-|-Leu-15, 15-Leu-|-Tyr-16, 16-Tyr-|-Leu-17, 23-Gly-|-Phe-24, 24-Phe-|-Phe-25 and 25-Phe-|-Tyr-26 bonds in the B chain of insulin.. Its function is as follows. Shows particularly broad specificity; although bonds involving phenylalanine and leucine are preferred, many others are also cleaved to some extent. The sequence is that of Pepsin A-4 (PGA4) from Homo sapiens (Human).